The primary structure comprises 301 residues: UDP-N-acetylenolpyruvoylglucosamine reductase (301 aa).

In terms of domain architecture, FAD-binding PCMH-type spans 30 to 194 (VGGEADYLVF…LSVKFALAPG (165 aa)). Residue Arg-173 is part of the active site. Ser-223 acts as the Proton donor in catalysis. Glu-293 is an active-site residue.

This sequence belongs to the MurB family. It depends on FAD as a cofactor.

Its subcellular location is the cytoplasm. The catalysed reaction is UDP-N-acetyl-alpha-D-muramate + NADP(+) = UDP-N-acetyl-3-O-(1-carboxyvinyl)-alpha-D-glucosamine + NADPH + H(+). It participates in cell wall biogenesis; peptidoglycan biosynthesis. Cell wall formation. The sequence is that of UDP-N-acetylenolpyruvoylglucosamine reductase from Streptococcus pneumoniae (strain JJA).